The following is an 86-amino-acid chain: Cell division topological specificity factor (86 aa).

The protein belongs to the MinE family.

In terms of biological role, prevents the cell division inhibition by proteins MinC and MinD at internal division sites while permitting inhibition at polar sites. This ensures cell division at the proper site by restricting the formation of a division septum at the midpoint of the long axis of the cell. The protein is Cell division topological specificity factor of Azoarcus sp. (strain BH72).